Here is a 418-residue protein sequence, read N- to C-terminus: Inner capsid protein sigma-2 (418 aa).

The protein belongs to the orthoreovirus sigma-1 protein family. In terms of assembly, interacts with protein mu-NS; in viral inclusions.

It is found in the virion. Its function is as follows. Inner capsid (core) component. This Mammalia (T1L) protein is Inner capsid protein sigma-2 (S2).